A 482-amino-acid polypeptide reads, in one-letter code: UDP-glycosyltransferase 86A2 (482 aa).

UDP-alpha-D-glucose-binding positions include S297, 355–357 (CCQ), 372–380 (HCGWNSILE), and 394–397 (LTDQ).

This sequence belongs to the UDP-glycosyltransferase family.

The sequence is that of UDP-glycosyltransferase 86A2 (UGT86A2) from Arabidopsis thaliana (Mouse-ear cress).